A 436-amino-acid chain; its full sequence is GDP-mannose 6-dehydrogenase (436 aa).

NAD(+) is bound by residues tyrosine 10, valine 11, aspartate 30, lysine 35, threonine 86, and threonine 124. 10 residues coordinate GDP-alpha-D-mannuronate: glutamate 161, lysine 210, asparagine 214, histidine 217, asparagine 225, tyrosine 256, tyrosine 257, arginine 259, phenylalanine 262, and glycine 265. Cysteine 268 acts as the Nucleophile in catalysis. Lysine 271 provides a ligand contact to NAD(+). The segment at 278-295 is inter-domain linker; that stretch reads YRASQLDVEHPMLGSLMR. Lysine 324 serves as a coordination point for GDP-alpha-D-mannuronate. Residue arginine 331 participates in NAD(+) binding.

This sequence belongs to the UDP-glucose/GDP-mannose dehydrogenase family. In terms of assembly, forms a domain-swapped dimer with each peptide contributing to each active site. The dimers assemble further. X-ray structures indicate this enzyme exists as a homotetramer PubMed:12705829, but kinetic and physical results obtained in PubMed:2470755 and PubMed:12135385 indicate that it is probably a homohexamer.

The enzyme catalyses GDP-alpha-D-mannose + 2 NAD(+) + H2O = GDP-alpha-D-mannuronate + 2 NADH + 3 H(+). The protein operates within glycan biosynthesis; alginate biosynthesis. With respect to regulation, inhibited by GMP, ATP, GDP-D-glucose and maltose. Inhibited by GMP and deamidoNAD. Its function is as follows. Catalyzes the oxidation of guanosine diphospho-D-mannose (GDP-D-mannose) to GDP-D-mannuronic acid, a precursor for alginate polymerization. The alginate layer causes a mucoid phenotype and provides a protective barrier against host immune defenses and antibiotics. Other sugars are not used as substrates. The polypeptide is GDP-mannose 6-dehydrogenase (Pseudomonas aeruginosa (strain ATCC 15692 / DSM 22644 / CIP 104116 / JCM 14847 / LMG 12228 / 1C / PRS 101 / PAO1)).